Reading from the N-terminus, the 476-residue chain is NADH-quinone oxidoreductase subunit N (476 aa).

14 helical membrane passes run 4–24 (LLAL…MLTI), 32–52 (LTAT…VVAW), 67–87 (GLAV…ATLG), 100–117 (EYYL…ALVS), 121–141 (LAAL…MLAY), 155–175 (YMVL…LLYS), 198–218 (LMAG…IVPF), 230–250 (PAPA…LVLL), 263–283 (LHSL…LLAL), 291–311 (LLGY…VVND), 319–339 (ALYL…VTLL), 366–386 (AVLT…GFIG), 406–426 (VVAG…TLFL), and 447–467 (VVVL…APMI).

This sequence belongs to the complex I subunit 2 family. As to quaternary structure, NDH-1 is composed of 14 different subunits. Subunits NuoA, H, J, K, L, M, N constitute the membrane sector of the complex.

The protein localises to the cell inner membrane. It catalyses the reaction a quinone + NADH + 5 H(+)(in) = a quinol + NAD(+) + 4 H(+)(out). NDH-1 shuttles electrons from NADH, via FMN and iron-sulfur (Fe-S) centers, to quinones in the respiratory chain. The immediate electron acceptor for the enzyme in this species is believed to be ubiquinone. Couples the redox reaction to proton translocation (for every two electrons transferred, four hydrogen ions are translocated across the cytoplasmic membrane), and thus conserves the redox energy in a proton gradient. The sequence is that of NADH-quinone oxidoreductase subunit N from Chromohalobacter salexigens (strain ATCC BAA-138 / DSM 3043 / CIP 106854 / NCIMB 13768 / 1H11).